The sequence spans 114 residues: Large ribosomal subunit protein uL22 (114 aa).

Belongs to the universal ribosomal protein uL22 family. In terms of assembly, part of the 50S ribosomal subunit.

Functionally, this protein binds specifically to 23S rRNA; its binding is stimulated by other ribosomal proteins, e.g. L4, L17, and L20. It is important during the early stages of 50S assembly. It makes multiple contacts with different domains of the 23S rRNA in the assembled 50S subunit and ribosome. In terms of biological role, the globular domain of the protein is located near the polypeptide exit tunnel on the outside of the subunit, while an extended beta-hairpin is found that lines the wall of the exit tunnel in the center of the 70S ribosome. This chain is Large ribosomal subunit protein uL22, found in Desulfitobacterium hafniense (strain Y51).